Reading from the N-terminus, the 243-residue chain is uncharacterized protein (243 aa).

Positions Met1–Ala19 are cleaved as a signal peptide. Residues Asn112 and Asn206 are each glycosylated (N-linked (GlcNAc...) asparagine).

This is an uncharacterized protein from Encephalitozoon cuniculi (strain GB-M1) (Microsporidian parasite).